We begin with the raw amino-acid sequence, 119 residues long: Holo-[acyl-carrier-protein] synthase (119 aa).

Asp5 and Glu51 together coordinate Mg(2+).

The protein belongs to the P-Pant transferase superfamily. AcpS family. Requires Mg(2+) as cofactor.

The protein localises to the cytoplasm. It catalyses the reaction apo-[ACP] + CoA = holo-[ACP] + adenosine 3',5'-bisphosphate + H(+). Its function is as follows. Transfers the 4'-phosphopantetheine moiety from coenzyme A to a Ser of acyl-carrier-protein. The polypeptide is Holo-[acyl-carrier-protein] synthase (Helicobacter pylori (strain ATCC 700392 / 26695) (Campylobacter pylori)).